Reading from the N-terminus, the 156-residue chain is uncharacterized protein (156 aa).

The stretch at 43-84 (LKIDENEVKLEISVEKLKNLSRVCENIEQVVDKVVEELRYAL) forms a coiled coil.

This is an uncharacterized protein from Aquifex aeolicus (strain VF5).